A 283-amino-acid polypeptide reads, in one-letter code: 5'-nucleotidase SurE (283 aa).

Positions 14, 15, 47, and 105 each coordinate a divalent metal cation.

Belongs to the SurE nucleotidase family. It depends on a divalent metal cation as a cofactor.

The protein localises to the cytoplasm. The catalysed reaction is a ribonucleoside 5'-phosphate + H2O = a ribonucleoside + phosphate. Its function is as follows. Nucleotidase that shows phosphatase activity on nucleoside 5'-monophosphates. The polypeptide is 5'-nucleotidase SurE (Chlamydia trachomatis serovar A (strain ATCC VR-571B / DSM 19440 / HAR-13)).